A 229-amino-acid chain; its full sequence is 7-cyano-7-deazaguanine synthase (229 aa).

An ATP-binding site is contributed by 14 to 24; it reads LSGGQDSTTCL. Zn(2+) is bound by residues C192, C200, C203, and C206.

It belongs to the QueC family. The cofactor is Zn(2+).

It catalyses the reaction 7-carboxy-7-deazaguanine + NH4(+) + ATP = 7-cyano-7-deazaguanine + ADP + phosphate + H2O + H(+). It functions in the pathway purine metabolism; 7-cyano-7-deazaguanine biosynthesis. Catalyzes the ATP-dependent conversion of 7-carboxy-7-deazaguanine (CDG) to 7-cyano-7-deazaguanine (preQ(0)). This Laribacter hongkongensis (strain HLHK9) protein is 7-cyano-7-deazaguanine synthase.